The following is a 1083-amino-acid chain: Alpha-mannosidase (1083 aa).

An N-acetylserine modification is found at Ser-2. Residues His-298, Asp-300, Asp-411, and His-626 each coordinate Zn(2+). The Nucleophile role is filled by Asp-411.

This sequence belongs to the glycosyl hydrolase 38 family. As to quaternary structure, composed of isoforms with three constituent polypeptides described as [(107 kDa)-n (73 kDa)-(6-n) (31 kDa)-(6-n)], where n is 0-6. The 73 kDa and the 31 kDa polypeptides may be proteolytic derivatives of the 107 kDa polypeptide in the vacuole. Oligomerizes in the cytoplasm and retains its oligomeric form during import into the vacuole. Requires Zn(2+) as cofactor. Post-translationally, the N-terminus is blocked.

Its subcellular location is the vacuole. It catalyses the reaction Hydrolysis of terminal, non-reducing alpha-D-mannose residues in alpha-D-mannosides.. Degrades free oligosaccharides in the vacuole. This is Alpha-mannosidase (AMS1) from Saccharomyces cerevisiae (strain ATCC 204508 / S288c) (Baker's yeast).